The following is a 613-amino-acid chain: DNA mismatch repair protein MutL (613 aa).

It belongs to the DNA mismatch repair MutL/HexB family.

Its function is as follows. This protein is involved in the repair of mismatches in DNA. It is required for dam-dependent methyl-directed DNA mismatch repair. May act as a 'molecular matchmaker', a protein that promotes the formation of a stable complex between two or more DNA-binding proteins in an ATP-dependent manner without itself being part of a final effector complex. In Flavobacterium psychrophilum (strain ATCC 49511 / DSM 21280 / CIP 103535 / JIP02/86), this protein is DNA mismatch repair protein MutL.